The sequence spans 2073 residues: Dedicator of cytokinesis protein 11 (2073 aa).

A Phosphoserine modification is found at serine 12. Position 16 is a phosphothreonine (threonine 16). Serine 23 and serine 161 each carry phosphoserine. A PH domain is found at 165–272 (GVIKQGWLHK…WLITLKKIIQ (108 aa)). At tyrosine 248 the chain carries Phosphotyrosine. Phosphoserine occurs at positions 306, 440, and 445. The C2 DOCK-type domain occupies 640 to 818 (KNHLYVYPLQ…PLLKIKSHLE (179 aa)). Positions 1226–1267 (FQNGHGIKREDSRGSLIPEGATGFPDQGNTGENTRQSSTRSS) are disordered. A phosphoserine mark is found at serine 1237 and serine 1240. The region spanning 1609-2036 (KSYASTPELR…LSDIIHEQIL (428 aa)) is the DOCKER domain.

It belongs to the DOCK family. Interacts with CDC42.

Functionally, guanine nucleotide-exchange factor (GEF) that activates CDC42 by exchanging bound GDP for free GTP. Required for marginal zone (MZ) B-cell development, is associated with early bone marrow B-cell development, MZ B-cell formation, MZ B-cell number and marginal metallophilic macrophages morphology. Facilitates filopodia formation through the activation of CDC42. The sequence is that of Dedicator of cytokinesis protein 11 from Homo sapiens (Human).